Reading from the N-terminus, the 313-residue chain is Proline-rich protein 3 (313 aa).

A signal peptide spans 1 to 22; it reads MAITRSSLAICLILSLVTITTA. The tract at residues 27-312 is 35 X 5 AA approximate repeats; the sequence is PSSPPVYKSP…GPKAAPATPK (286 aa). A run of 35 repeats spans residues 30–34, 35–39, 40–43, 44–48, 49–53, 54–57, 58–62, 64–67, 68–72, 73–77, 82–86, 87–91, 92–96, 97–101, 102–105, 106–110, 111–115, 116–120, 121–125, 126–131, 132–136, 137–141, 142–146, 147–150, 151–155, 157–163, 164–168, 169–174, 175–181, 182–186, 187–229, 258–262, 266–270, 298–302, and 308–312.

It belongs to the plant proline-rich protein superfamily. ENOD12 family. As to expression, exclusively expressed in roots, particularly in root hairs-containing regions, and especially in root hairs.

The protein resides in the secreted. The protein localises to the cell wall. Functionally, may contribute to cell wall structure in root hairs. The sequence is that of Proline-rich protein 3 (PRP3) from Arabidopsis thaliana (Mouse-ear cress).